The sequence spans 1178 residues: Double-stranded RNA-specific adenosine deaminase (1178 aa).

The tract at residues 1–40 (MSQGFRGPTGVFPHQTQSYLDPSHEHSKWRYPQPQGPESY) is disordered. An asymmetric dimethylarginine mark is found at R30 and R42. Residues 135–201 (LSISQSPEQK…GKPPLWSLVP (67 aa)) form the Z-binding 1 domain. Positions 135–204 (LSISQSPEQK…PLWSLVPLSQ (70 aa)) are interaction with Z-DNA. Positions 221-244 (EFPRGEPGLDSEDGDPASDLEGPS) are disordered. The span at 229 to 238 (LDSEDGDPAS) shows a compositional bias: acidic residues. A phosphoserine mark is found at S231 and S238. In terms of domain architecture, Z-binding 2 spans 246-310 (PLDMAEIKEK…ATPPIWYLTD (65 aa)). Residues 316–383 (LQMKRSTHSA…SRHEARPGPM (68 aa)) are disordered. Residues 323–337 (HSAPAPTPTAVPEAT) are compositionally biased toward low complexity. Positions 360–379 (KRVENGQEPAIKHESRHEAR) are enriched in basic and acidic residues. K371 is covalently cross-linked (Glycyl lysine isopeptide (Lys-Gly) (interchain with G-Cter in SUMO); alternate). A Glycyl lysine isopeptide (Lys-Gly) (interchain with G-Cter in SUMO1); alternate cross-link involves residue K371. K371 participates in a covalent cross-link: Glycyl lysine isopeptide (Lys-Gly) (interchain with G-Cter in SUMO2); alternate. Residue S434 is modified to Phosphoserine. The 69-residue stretch at 456–524 (NPVSGLLEYA…AVKAMAILLR (69 aa)) folds into the DRBM 1 domain. The segment covering 527-550 (KAKDSGQPEDLSHCPMEEDSEKPA) has biased composition (basic and acidic residues). Positions 527–564 (KAKDSGQPEDLSHCPMEEDSEKPAEAQAPSSSATSLFS) are disordered. Positions 554–564 (APSSSATSLFS) are enriched in polar residues. Residues S567, S582, and S589 each carry the phosphoserine modification. The DRBM 2 domain occupies 567-635 (SPVTTLLECM…AEEAMKALQE (69 aa)). The disordered stretch occupies residues 631 to 657 (KALQEEAASSADDQSGGANTDSLDESM). The span at 635 to 648 (EEAASSADDQSGGA) shows a compositional bias: low complexity. The interval 665 to 674 (IGELVRYLNT) is N-terminal extension of DRBM 3 and constituent of a bi-partite nuclear localization signal. Residues 675-743 (NPVGGLLEYA…ADAALRVLIG (69 aa)) form the DRBM 3 domain. A C-terminal extension of DRBM 3 and constituent of a bi-partite nuclear localization signal region spans residues 744–750 (ESEKAEQ). T757 carries the post-translational modification Phosphothreonine. A phosphoserine mark is found at S763, S772, and S774. Residue K824 forms a Glycyl lysine isopeptide (Lys-Gly) (interchain with G-Cter in SUMO2) linkage. One can recognise an A to I editase domain in the interval 835–1170 (SLGTGNRCVK…ISKPQEEKNF (336 aa)). Residue H859 participates in Zn(2+) binding. E861 acts as the Proton donor in catalysis. C915 and C985 together coordinate Zn(2+).

As to quaternary structure, homodimer. Homodimerization is essential for its catalytic activity. Isoform 5 can form heterodimers with ADARB1/ADAR2. Isoform 1 and isoform 5 (via DRBM 3 domain) interact with TNPO1. Isoform 5 (via DRBM domains) interacts with XPO5. Isoform 1 and isoform 5 can interact with UPF1. Isoform 1 interacts with ILF2/NF45 and ILF3/NF90. Binding to ILF3/NF90 up-regulates ILF3-mediated gene expression. Isoform 1 and isoform 5 interact with EIF2AK2/PKR. Post-translationally, sumoylation reduces RNA-editing activity. Highest levels in brain and spleen. Lowest levels in liver.

It is found in the cytoplasm. The protein resides in the nucleus. It localises to the nucleolus. It carries out the reaction adenosine in double-stranded RNA + H2O + H(+) = inosine in double-stranded RNA + NH4(+). Catalyzes the hydrolytic deamination of adenosine to inosine in double-stranded RNA (dsRNA) referred to as A-to-I RNA editing. This may affect gene expression and function in a number of ways that include mRNA translation by changing codons and hence the amino acid sequence of proteins since the translational machinery read the inosine as a guanosine; pre-mRNA splicing by altering splice site recognition sequences; RNA stability by changing sequences involved in nuclease recognition; genetic stability in the case of RNA virus genomes by changing sequences during viral RNA replication; and RNA structure-dependent activities such as microRNA production or targeting or protein-RNA interactions. Can edit both viral and cellular RNAs and can edit RNAs at multiple sites (hyper-editing) or at specific sites (site-specific editing). Its cellular RNA substrates include: bladder cancer-associated protein (BLCAP), neurotransmitter receptors for glutamate (GRIA2) and serotonin (HTR2C) and GABA receptor (GABRA3). Site-specific RNA editing of transcripts encoding these proteins results in amino acid substitutions which consequently alters their functional activities. Exhibits low-level editing at the GRIA2 Q/R site, but edits efficiently at the R/G site and HOTSPOT1. Does not affect polyomavirus replication but provides protection against virus-induced cytopathic effects. Essential for embryonic development and cell survival and plays a critical role in the maintenance of hematopoietic stem cells. The chain is Double-stranded RNA-specific adenosine deaminase (Adar) from Mus musculus (Mouse).